A 508-amino-acid polypeptide reads, in one-letter code: Pancreatic alpha-amylase 2a5 (508 aa).

Residues M1–A15 form the signal peptide. Pyrrolidone carboxylic acid is present on Q16. Intrachain disulfides connect C43–C101, C85–C130, and C156–C172. 3 residues coordinate Ca(2+): N115, R170, and D179. Residue R207 participates in chloride binding. The active-site Nucleophile is the D209. Residue H213 coordinates Ca(2+). Residue E245 is the Proton donor of the active site. Residues N310 and R349 each contribute to the chloride site. 2 disulfide bridges follow: C390-C396 and C462-C474.

Belongs to the glycosyl hydrolase 13 family. As to quaternary structure, monomer. It depends on Ca(2+) as a cofactor. Requires chloride as cofactor.

Its subcellular location is the secreted. It is found in the extracellular space. The catalysed reaction is Endohydrolysis of (1-&gt;4)-alpha-D-glucosidic linkages in polysaccharides containing three or more (1-&gt;4)-alpha-linked D-glucose units.. The sequence is that of Pancreatic alpha-amylase 2a5 from Mus musculus (Mouse).